The following is a 116-amino-acid chain: NADH-ubiquinone oxidoreductase chain 3 (116 aa).

The next 3 membrane-spanning stretches (helical) occupy residues 4-24, 56-76, and 88-108; these read LIIT…IAFW, FFLV…LLPL, and TLIL…YEWI.

The protein belongs to the complex I subunit 3 family. As to quaternary structure, core subunit of respiratory chain NADH dehydrogenase (Complex I) which is composed of 45 different subunits. Interacts with TMEM186. Interacts with TMEM242.

The protein localises to the mitochondrion inner membrane. It catalyses the reaction a ubiquinone + NADH + 5 H(+)(in) = a ubiquinol + NAD(+) + 4 H(+)(out). Core subunit of the mitochondrial membrane respiratory chain NADH dehydrogenase (Complex I) which catalyzes electron transfer from NADH through the respiratory chain, using ubiquinone as an electron acceptor. Essential for the catalytic activity of complex I. The polypeptide is NADH-ubiquinone oxidoreductase chain 3 (Didelphis virginiana (North American opossum)).